Here is a 152-residue protein sequence, read N- to C-terminus: Transcriptional regulator MraZ (152 aa).

SpoVT-AbrB domains lie at 5–52 (AQAI…PLKE) and 81–124 (ATEC…SETE).

This sequence belongs to the MraZ family. Forms oligomers.

It is found in the cytoplasm. The protein localises to the nucleoid. The protein is Transcriptional regulator MraZ of Mannheimia succiniciproducens (strain KCTC 0769BP / MBEL55E).